Consider the following 249-residue polypeptide: UDP-2,3-diacylglucosamine hydrolase (249 aa).

Residues aspartate 7, histidine 9, aspartate 40, asparagine 78, and histidine 113 each contribute to the Mn(2+) site. 78 to 79 (NR) contributes to the substrate binding site. Substrate-binding residues include aspartate 121, serine 159, threonine 163, lysine 166, and histidine 194. Positions 194 and 196 each coordinate Mn(2+).

The protein belongs to the LpxH family. Mn(2+) is required as a cofactor.

Its subcellular location is the cell inner membrane. It carries out the reaction UDP-2-N,3-O-bis[(3R)-3-hydroxytetradecanoyl]-alpha-D-glucosamine + H2O = 2-N,3-O-bis[(3R)-3-hydroxytetradecanoyl]-alpha-D-glucosaminyl 1-phosphate + UMP + 2 H(+). Its pathway is glycolipid biosynthesis; lipid IV(A) biosynthesis; lipid IV(A) from (3R)-3-hydroxytetradecanoyl-[acyl-carrier-protein] and UDP-N-acetyl-alpha-D-glucosamine: step 4/6. Its function is as follows. Hydrolyzes the pyrophosphate bond of UDP-2,3-diacylglucosamine to yield 2,3-diacylglucosamine 1-phosphate (lipid X) and UMP by catalyzing the attack of water at the alpha-P atom. Involved in the biosynthesis of lipid A, a phosphorylated glycolipid that anchors the lipopolysaccharide to the outer membrane of the cell. The protein is UDP-2,3-diacylglucosamine hydrolase of Pseudomonas fluorescens (strain SBW25).